The sequence spans 666 residues: ATP synthase subunit alpha 2 (666 aa).

182–189 lines the ATP pocket; it reads GDRATGKT. The interval 527–666 is disordered; it reads MPAEDAAGDI…DAEAEARHKR (140 aa). The segment covering 545 to 590 has biased composition (basic and acidic residues); sequence ARGDADRDADHGANREVSREVSPEASREVSREVSCEVSHEADRDAA. The span at 591 to 601 shows a compositional bias: low complexity; it reads ADAARVAGRAP. Basic and acidic residues predominate over residues 623–641; that stretch reads ADGDRASASRPRPDARGDA.

Belongs to the ATPase alpha/beta chains family. F-type ATPases have 2 components, CF(1) - the catalytic core - and CF(0) - the membrane proton channel. CF(1) has five subunits: alpha(3), beta(3), gamma(1), delta(1), epsilon(1). CF(0) has three main subunits: a(1), b(2) and c(9-12). The alpha and beta chains form an alternating ring which encloses part of the gamma chain. CF(1) is attached to CF(0) by a central stalk formed by the gamma and epsilon chains, while a peripheral stalk is formed by the delta and b chains.

The protein resides in the cell inner membrane. The catalysed reaction is ATP + H2O + 4 H(+)(in) = ADP + phosphate + 5 H(+)(out). Produces ATP from ADP in the presence of a proton gradient across the membrane. The alpha chain is a regulatory subunit. The polypeptide is ATP synthase subunit alpha 2 (Burkholderia pseudomallei (strain K96243)).